Reading from the N-terminus, the 621-residue chain is UvrABC system protein C (621 aa).

The 79-residue stretch at 20–98 (TAPGVYRMYA…IKSLTPRYNV (79 aa)) folds into the GIY-YIG domain. Residues 207–242 (DLLAEELIQAMQVASEHLEFEQAARLRDLLTSLRSM) form the UVR domain.

This sequence belongs to the UvrC family. Interacts with UvrB in an incision complex.

The protein resides in the cytoplasm. In terms of biological role, the UvrABC repair system catalyzes the recognition and processing of DNA lesions. UvrC both incises the 5' and 3' sides of the lesion. The N-terminal half is responsible for the 3' incision and the C-terminal half is responsible for the 5' incision. In Xylella fastidiosa (strain M23), this protein is UvrABC system protein C.